Reading from the N-terminus, the 78-residue chain is Short neurotoxin SNTX11 (78 aa).

An N-terminal signal peptide occupies residues 1–21; that stretch reads MKTLLLTFLVVTIVCLDLGYT. 4 cysteine pairs are disulfide-bonded: C24–C40, C33–C58, C62–C70, and C71–C76.

The protein belongs to the three-finger toxin family. Short-chain subfamily. In terms of tissue distribution, expressed by the venom gland.

It localises to the secreted. In terms of biological role, this three-finger toxin binds and inhibits the nicotinic acetylcholine receptor (nAChR). This Ophiophagus hannah (King cobra) protein is Short neurotoxin SNTX11.